A 280-amino-acid polypeptide reads, in one-letter code: Cobalt import ATP-binding protein CbiO (280 aa).

Residues 2-236 form the ABC transporter domain; it reads IEVRDLRFHY…GDWLRQQGLG (235 aa). Position 36–43 (36–43) interacts with ATP; it reads GANGCGKT.

It belongs to the ABC transporter superfamily. Cobalt importer (TC 3.A.1.18.1) family. Forms an energy-coupling factor (ECF) transporter complex composed of an ATP-binding protein (A component, CbiO), a transmembrane protein (T component, CbiQ) and 2 possible substrate-capture proteins (S components, CbiM and CbiN) of unknown stoichimetry.

The protein resides in the cell inner membrane. It functions in the pathway cofactor biosynthesis; adenosylcobalamin biosynthesis. Part of the energy-coupling factor (ECF) transporter complex CbiMNOQ involved in cobalt import. Presumably responsible for energy coupling to the transport system. This is Cobalt import ATP-binding protein CbiO from Syntrophus aciditrophicus (strain SB).